The sequence spans 241 residues: Aliphatic sulfonates import ATP-binding protein SsuB (241 aa).

An ABC transporter domain is found at 10–226; it reads VHLHGFSRSF…RPDHPAFMQL (217 aa). ATP is bound at residue 42 to 49; the sequence is GESGSGKT.

Belongs to the ABC transporter superfamily. Aliphatic sulfonates importer (TC 3.A.1.17.2) family. The complex is composed of two ATP-binding proteins (SsuB), two transmembrane proteins (SsuC) and a solute-binding protein (SsuA).

Its subcellular location is the cell inner membrane. The catalysed reaction is ATP + H2O + aliphatic sulfonate-[sulfonate-binding protein]Side 1 = ADP + phosphate + aliphatic sulfonateSide 2 + [sulfonate-binding protein]Side 1.. Its function is as follows. Part of the ABC transporter complex SsuABC involved in aliphatic sulfonates import. Responsible for energy coupling to the transport system. This Delftia acidovorans (Pseudomonas acidovorans) protein is Aliphatic sulfonates import ATP-binding protein SsuB.